A 73-amino-acid polypeptide reads, in one-letter code: UPF0346 protein SSP1318 (73 aa).

It belongs to the UPF0346 family.

The protein is UPF0346 protein SSP1318 of Staphylococcus saprophyticus subsp. saprophyticus (strain ATCC 15305 / DSM 20229 / NCIMB 8711 / NCTC 7292 / S-41).